Here is a 303-residue protein sequence, read N- to C-terminus: Pyridoxal 5'-phosphate synthase subunit PdxS (303 aa).

Asp-33 is a D-ribose 5-phosphate binding site. Catalysis depends on Lys-90, which acts as the Schiff-base intermediate with D-ribose 5-phosphate. Position 162 (Gly-162) interacts with D-ribose 5-phosphate. A D-glyceraldehyde 3-phosphate-binding site is contributed by Arg-174. D-ribose 5-phosphate contacts are provided by residues Gly-223 and 244 to 245 (GS).

The protein belongs to the PdxS/SNZ family. As to quaternary structure, in the presence of PdxT, forms a dodecamer of heterodimers.

The catalysed reaction is aldehydo-D-ribose 5-phosphate + D-glyceraldehyde 3-phosphate + L-glutamine = pyridoxal 5'-phosphate + L-glutamate + phosphate + 3 H2O + H(+). Its pathway is cofactor biosynthesis; pyridoxal 5'-phosphate biosynthesis. Its function is as follows. Catalyzes the formation of pyridoxal 5'-phosphate from ribose 5-phosphate (RBP), glyceraldehyde 3-phosphate (G3P) and ammonia. The ammonia is provided by the PdxT subunit. Can also use ribulose 5-phosphate and dihydroxyacetone phosphate as substrates, resulting from enzyme-catalyzed isomerization of RBP and G3P, respectively. This Mycobacterium avium (strain 104) protein is Pyridoxal 5'-phosphate synthase subunit PdxS.